The sequence spans 66 residues: Large ribosomal subunit protein uL29 (66 aa).

It belongs to the universal ribosomal protein uL29 family.

The chain is Large ribosomal subunit protein uL29 from Bartonella tribocorum (strain CIP 105476 / IBS 506).